The following is a 464-amino-acid chain: Siroheme synthase (464 aa).

Residues methionine 1–leucine 203 are precorrin-2 dehydrogenase /sirohydrochlorin ferrochelatase. Residues glutamate 22–isoleucine 23 and proline 43–glutamate 44 each bind NAD(+). Phosphoserine is present on serine 128. The interval glycine 216–valine 464 is uroporphyrinogen-III C-methyltransferase. Proline 225 serves as a coordination point for S-adenosyl-L-methionine. Aspartate 248 (proton acceptor) is an active-site residue. Lysine 270 functions as the Proton donor in the catalytic mechanism. Residues glycine 301–aspartate 303, isoleucine 306, threonine 331–alanine 332, methionine 383, and glycine 412 each bind S-adenosyl-L-methionine.

It in the N-terminal section; belongs to the precorrin-2 dehydrogenase / sirohydrochlorin ferrochelatase family. The protein in the C-terminal section; belongs to the precorrin methyltransferase family.

It catalyses the reaction uroporphyrinogen III + 2 S-adenosyl-L-methionine = precorrin-2 + 2 S-adenosyl-L-homocysteine + H(+). It carries out the reaction precorrin-2 + NAD(+) = sirohydrochlorin + NADH + 2 H(+). The enzyme catalyses siroheme + 2 H(+) = sirohydrochlorin + Fe(2+). It functions in the pathway cofactor biosynthesis; adenosylcobalamin biosynthesis; precorrin-2 from uroporphyrinogen III: step 1/1. Its pathway is cofactor biosynthesis; adenosylcobalamin biosynthesis; sirohydrochlorin from precorrin-2: step 1/1. The protein operates within porphyrin-containing compound metabolism; siroheme biosynthesis; precorrin-2 from uroporphyrinogen III: step 1/1. It participates in porphyrin-containing compound metabolism; siroheme biosynthesis; siroheme from sirohydrochlorin: step 1/1. It functions in the pathway porphyrin-containing compound metabolism; siroheme biosynthesis; sirohydrochlorin from precorrin-2: step 1/1. Functionally, multifunctional enzyme that catalyzes the SAM-dependent methylations of uroporphyrinogen III at position C-2 and C-7 to form precorrin-2 via precorrin-1. Then it catalyzes the NAD-dependent ring dehydrogenation of precorrin-2 to yield sirohydrochlorin. Finally, it catalyzes the ferrochelation of sirohydrochlorin to yield siroheme. This Pseudomonas fluorescens (strain ATCC BAA-477 / NRRL B-23932 / Pf-5) protein is Siroheme synthase.